The following is a 769-amino-acid chain: Cap-specific mRNA (nucleoside-2'-O-)-methyltransferase 2 (769 aa).

Residues 109–322 (ELCTQAWCKF…VYVVCLYYKG (214 aa)) enclose the Adrift-type SAM-dependent 2'-O-MTase domain. Lys-117 is an active-site residue. 3 residues coordinate S-adenosyl-L-methionine: Gly-148, Trp-167, and Asp-235. The active site involves Asp-235. Catalysis depends on Lys-275, which acts as the Proton acceptor.

The protein localises to the nucleus. It localises to the cytoplasm. The catalysed reaction is a 5'-end (N(7)-methyl 5'-triphosphoguanosine)-(2'-O-methyl-ribonucleoside)-(ribonucleotide) in mRNA + S-adenosyl-L-methionine = a 5'-end (N(7)-methyl 5'-triphosphoguanosine)-(2'-O-methyl-ribonucleoside)-(2'-O-methyl-ribonucleotide) in mRNA + S-adenosyl-L-homocysteine + H(+). Its function is as follows. S-adenosyl-L-methionine-dependent methyltransferase that mediates mRNA cap2 2'-O-ribose methylation to the 5'-cap structure of mRNAs. Methylates the ribose of the second nucleotide of a m(7)GpppG-capped mRNA and small nuclear RNA (snRNA) (cap0) to produce m(7)GpppRmpNm (cap2). Recognizes a guanosine cap on RNA independently of its N(7) methylation status. Display cap2 methylation on both cap0 and cap1. Displays a preference for cap1 RNAs. In Pongo abelii (Sumatran orangutan), this protein is Cap-specific mRNA (nucleoside-2'-O-)-methyltransferase 2 (CMTR2).